We begin with the raw amino-acid sequence, 806 residues long: MAPAHSRTGKPQKPFRQNNRSLKRKRNEDDLSSLTQRVGELDPKSLAESFSELPLSDATLQGLSASHFKTLTDIQSRAVPHAIKGRDILGAAKTGSGKTLAFLVPVLENLYRKQWTEYDGLGALILSPTRELAIQIFEVLRKIGRYHTFSAGLVIGGKSLQEEQERLGRMNILVCTPGRMLQHMDQTAAFDTAHIQMLVLDEADRIMDMGFQSTVDAIVEHLPKERQTMLFSATQTKKVSDLARLSLRDPEYISVHEAASSATPASLQQHYVVTPLPEKLDTLWSFIRNTLKSKILVFFSSSKQVRFVYEAFRHMQPGIPLLHLHGRQKQSARIDITSKFSRAKYSCLFSTDVAARGLDFPAVDWVIQLDCPEDADTYIHRVGRTARYERDGRAVLFLDPSEEEGMLKRLEQKKIPIERINIKAKKQQSIMNQLQNMCFKDPALKYLGQKAFTSYVKSVHIQKDKDVFNVKSLPLEEFASSLGLPGAPRIKFIKGEDTKSRKNAPRHLAVVPSSDEDSDEEGLTKKKKENEVRTKYDRMFERRNQDVLTEHYTKLIRDEDEIDPDEKDNPAADADEDDGFLSVKRRFDAGDENLGEGLGSEAEIDGIKKGKAVQIDGKEPLIIDSKRREKLLKSKKKLLKYKGKGTKLVYDDEGNAHEIYEMEDEQQFKAQGDADAQRAKYLELEAERTRLADIRDKEIAKQKKREKKEKRRARARAEREAEDGPVAVLAPYEEDEGLREDDFSAEDRGSEDGRAPPSKKQKKWFQSDSDVDGEDGGKKRKRPRAQSPAQVETLEDLEALAAELLE.

The interval 1–37 is disordered; sequence MAPAHSRTGKPQKPFRQNNRSLKRKRNEDDLSSLTQR. Positions 48–76 match the Q motif motif; it reads ESFSELPLSDATLQGLSASHFKTLTDIQS. Residues 79 to 253 enclose the Helicase ATP-binding domain; sequence VPHAIKGRDI…RLSLRDPEYI (175 aa). 92-99 is an ATP binding site; sequence AKTGSGKT. Residues 201–204 carry the DEAD box motif; it reads DEAD. Residues 279–438 enclose the Helicase C-terminal domain; the sequence is KLDTLWSFIR…SIMNQLQNMC (160 aa). Disordered regions lie at residues 495-530, 555-584, and 692-795; these read GEDT…KKEN, LIRD…LSVK, and ADIR…ETLE. Over residues 692–701 the composition is skewed to basic and acidic residues; that stretch reads ADIRDKEIAK. Basic residues predominate over residues 702–714; that stretch reads QKKREKKEKRRAR. Residues 740–754 are compositionally biased toward basic and acidic residues; sequence EDDFSAEDRGSEDGR.

The protein belongs to the DEAD box helicase family. DDX10/DBP4 subfamily. Interacts with the U3 and U14 snoRNAs. Associates with pre-ribosomal complexes.

The protein localises to the nucleus. It is found in the nucleolus. The catalysed reaction is ATP + H2O = ADP + phosphate + H(+). Its function is as follows. ATP-dependent RNA helicase required for ribosome biogenesis. Involved in the release of U14 snoRNA in pre-ribosomal complexes. Required for pre-rRNA cleavage at site A2. This Coccidioides immitis (strain RS) (Valley fever fungus) protein is ATP-dependent RNA helicase DBP4 (DBP4).